The chain runs to 143 residues: D-aminoacyl-tRNA deacylase (143 aa).

The short motif at 135–136 is the Gly-cisPro motif, important for rejection of L-amino acids element; it reads GP.

Belongs to the DTD family. Homodimer.

The protein localises to the cytoplasm. It carries out the reaction glycyl-tRNA(Ala) + H2O = tRNA(Ala) + glycine + H(+). The catalysed reaction is a D-aminoacyl-tRNA + H2O = a tRNA + a D-alpha-amino acid + H(+). Functionally, an aminoacyl-tRNA editing enzyme that deacylates mischarged D-aminoacyl-tRNAs. Also deacylates mischarged glycyl-tRNA(Ala), protecting cells against glycine mischarging by AlaRS. Acts via tRNA-based rather than protein-based catalysis; rejects L-amino acids rather than detecting D-amino acids in the active site. By recycling D-aminoacyl-tRNA to D-amino acids and free tRNA molecules, this enzyme counteracts the toxicity associated with the formation of D-aminoacyl-tRNA entities in vivo and helps enforce protein L-homochirality. This chain is D-aminoacyl-tRNA deacylase, found in Mycobacterium marinum (strain ATCC BAA-535 / M).